Reading from the N-terminus, the 631-residue chain is Arginine--tRNA ligase (631 aa).

The 'HIGH' region signature appears at 132–142; sequence PNIAKPLHVGH.

It belongs to the class-I aminoacyl-tRNA synthetase family.

It localises to the cytoplasm. The enzyme catalyses tRNA(Arg) + L-arginine + ATP = L-arginyl-tRNA(Arg) + AMP + diphosphate. The chain is Arginine--tRNA ligase from Halobacterium salinarum (strain ATCC 700922 / JCM 11081 / NRC-1) (Halobacterium halobium).